A 555-amino-acid polypeptide reads, in one-letter code: TBCC domain-containing protein 1 (555 aa).

The C-CAP/cofactor C-like domain maps to 302–433 (PEVSPMVIMS…LEDHMAQVGL (132 aa)).

Belongs to the TBCC family.

It localises to the cytoplasm. The protein resides in the cytoskeleton. Its subcellular location is the microtubule organizing center. The protein localises to the centrosome. It is found in the spindle pole. May play a role in the regulation of centrosome and Golgi apparatus positioning. The sequence is that of TBCC domain-containing protein 1 (TBCCD1) from Gallus gallus (Chicken).